Consider the following 355-residue polypeptide: Peptide chain release factor 1 (355 aa).

Gln233 is modified (N5-methylglutamine).

Belongs to the prokaryotic/mitochondrial release factor family. Methylated by PrmC. Methylation increases the termination efficiency of RF1.

It is found in the cytoplasm. In terms of biological role, peptide chain release factor 1 directs the termination of translation in response to the peptide chain termination codons UAG and UAA. This Syntrophobacter fumaroxidans (strain DSM 10017 / MPOB) protein is Peptide chain release factor 1.